The sequence spans 148 residues: Large ribosomal subunit protein bL9 (148 aa).

The protein belongs to the bacterial ribosomal protein bL9 family.

Its function is as follows. Binds to the 23S rRNA. This Bacillus thuringiensis subsp. konkukian (strain 97-27) protein is Large ribosomal subunit protein bL9.